Here is a 341-residue protein sequence, read N- to C-terminus: HTH-type transcriptional repressor CytR (341 aa).

An HTH lacI-type domain is found at 10–64 (ATMKDVALKAKVSTATVSRALMNPDKVSQATRNRVEKAAREVGYLPQPMGRNVKR). Positions 12-31 (MKDVALKAKVSTATVSRALM) form a DNA-binding region, H-T-H motif.

Its function is as follows. This protein negatively controls the transcription initiation of genes such as deoCABD, udp, and cdd encoding catabolizing enzymes and nupC, nupG, and tsx encoding transporting and pore-forming proteins. Binds cytidine and adenosine as effectors. This Escherichia coli (strain K12) protein is HTH-type transcriptional repressor CytR (cytR).